The chain runs to 222 residues: MRIHDFDPDNRPRERLLRSGAASLSPAELLAIILRTGTKNLNIVDTCNELIARYSLEKLANITLEELKKVKGIGDAKAMQIVAIFELNKRLHYSRNLNKKIQAARDVFEYMAGRVPDETKEHLFVLHLNTKNQIIKTELVSVGTLNAALIHPREVFKSAIKESSHAIILVHNHPSGDVEPSNADKQVTDLLKQASTVIQIDLLDHIIIGKTGCFSFRESGLL.

The MPN domain occupies 100–222; sequence KIQAARDVFE…CFSFRESGLL (123 aa). 3 residues coordinate Zn(2+): histidine 171, histidine 173, and aspartate 184. A JAMM motif motif is present at residues 171–184; the sequence is HNHPSGDVEPSNAD.

This sequence belongs to the UPF0758 family.

The polypeptide is UPF0758 protein Ppha_0935 (Pelodictyon phaeoclathratiforme (strain DSM 5477 / BU-1)).